We begin with the raw amino-acid sequence, 160 residues long: MSSLTHLTSHGEAVMVDVSDKAETERVAIAEARVVMRMETLELALSGNAEKGDVVATARIAGIMAAKKTHELIPLCHPLLLTKVGVDLEPDPSLPGFRVQALAKVKGQTGVEMEALTAVSVACLTLYDMLKAVDRFMRIEGIGLLEKQGGKSGSWKREKE.

Residues 75–77 (LCH) and 113–114 (ME) each bind substrate. The active site involves Asp-128.

The protein belongs to the MoaC family. Homohexamer; trimer of dimers.

It catalyses the reaction (8S)-3',8-cyclo-7,8-dihydroguanosine 5'-triphosphate = cyclic pyranopterin phosphate + diphosphate. It functions in the pathway cofactor biosynthesis; molybdopterin biosynthesis. Functionally, catalyzes the conversion of (8S)-3',8-cyclo-7,8-dihydroguanosine 5'-triphosphate to cyclic pyranopterin monophosphate (cPMP). In Beijerinckia indica subsp. indica (strain ATCC 9039 / DSM 1715 / NCIMB 8712), this protein is Cyclic pyranopterin monophosphate synthase.